The primary structure comprises 440 residues: Xylose isomerase (440 aa).

Active-site residues include histidine 101 and aspartate 104. Residues glutamate 232, glutamate 268, histidine 271, aspartate 296, aspartate 307, aspartate 309, and aspartate 339 each coordinate Mg(2+).

This sequence belongs to the xylose isomerase family. In terms of assembly, homotetramer. It depends on Mg(2+) as a cofactor.

Its subcellular location is the cytoplasm. It carries out the reaction alpha-D-xylose = alpha-D-xylulofuranose. This chain is Xylose isomerase, found in Escherichia coli (strain SMS-3-5 / SECEC).